A 370-amino-acid chain; its full sequence is Cytochrome b (370 aa).

The next 4 membrane-spanning stretches (helical) occupy residues 25 to 45, 69 to 90, 105 to 125, and 170 to 190; these read FGSM…FLAV, WMMQ…YIHI, WLSG…GYVL, and FFAL…LHIL. Heme b contacts are provided by His-75 and His-89. Residues His-174 and His-188 each coordinate heme b. Residue His-193 coordinates a ubiquinone. The next 4 helical transmembrane spans lie at 218–238, 280–300, 312–332, and 339–358; these read YKDM…VSFF, LGGA…PFTH, LMQL…WTAT, and FTTI…ISNP.

Belongs to the cytochrome b family. As to quaternary structure, the cytochrome bc1 complex contains 3 respiratory subunits (MT-CYB, CYC1 and UQCRFS1), 2 core proteins (UQCRC1 and UQCRC2) and probably 6 low-molecular weight proteins. Heme b is required as a cofactor.

The protein localises to the mitochondrion inner membrane. Component of the ubiquinol-cytochrome c reductase complex (complex III or cytochrome b-c1 complex) that is part of the mitochondrial respiratory chain. The b-c1 complex mediates electron transfer from ubiquinol to cytochrome c. Contributes to the generation of a proton gradient across the mitochondrial membrane that is then used for ATP synthesis. This is Cytochrome b (MT-CYB) from Chilabothrus striatus (Haitian boa constrictor).